The chain runs to 397 residues: uncharacterized protein (397 aa).

A run of 9 helical transmembrane segments spans residues 1–21 (MGAS…LMLV), 39–59 (VIQS…VVVF), 76–96 (EALS…FGVP), 103–123 (VLLF…FVGA), 124–144 (ALIE…LVMA), 194–214 (MMTP…LFAF), 219–239 (ALFG…FSLL), 255–275 (LVYL…KLML), and 301–321 (QSLT…FWSA).

It belongs to the TerC family.

The protein localises to the cell membrane. This is an uncharacterized protein from Mycobacterium bovis (strain ATCC BAA-935 / AF2122/97).